An 88-amino-acid polypeptide reads, in one-letter code: UPF0367 protein Synpcc7942_1638 (88 aa).

Belongs to the UPF0367 family.

The sequence is that of UPF0367 protein Synpcc7942_1638 from Synechococcus elongatus (strain ATCC 33912 / PCC 7942 / FACHB-805) (Anacystis nidulans R2).